We begin with the raw amino-acid sequence, 418 residues long: S-adenosylmethionine synthase (418 aa).

An ATP-binding site is contributed by histidine 16. Mg(2+) is bound at residue aspartate 18. Position 44 (glutamate 44) interacts with K(+). The L-methionine site is built by glutamate 57 and glutamine 100. The tract at residues 100 to 110 (QSPDIAQGVDS) is flexible loop. ATP-binding positions include 174-176 (DGK), aspartate 259, 265-266 (RK), alanine 282, and lysine 286. Aspartate 259 contributes to the L-methionine binding site. Position 290 (lysine 290) interacts with L-methionine.

This sequence belongs to the AdoMet synthase family. In terms of assembly, homotetramer; dimer of dimers. Mg(2+) is required as a cofactor. It depends on K(+) as a cofactor.

The protein localises to the cytoplasm. The enzyme catalyses L-methionine + ATP + H2O = S-adenosyl-L-methionine + phosphate + diphosphate. Its pathway is amino-acid biosynthesis; S-adenosyl-L-methionine biosynthesis; S-adenosyl-L-methionine from L-methionine: step 1/1. Its function is as follows. Catalyzes the formation of S-adenosylmethionine (AdoMet) from methionine and ATP. The overall synthetic reaction is composed of two sequential steps, AdoMet formation and the subsequent tripolyphosphate hydrolysis which occurs prior to release of AdoMet from the enzyme. The protein is S-adenosylmethionine synthase of Acaryochloris marina (strain MBIC 11017).